The chain runs to 356 residues: Tyrosine recombinase XerS (356 aa).

In terms of domain architecture, Core-binding (CB) spans 16–121 (IMPWYVLDYY…ALSSLYKYLT (106 aa)). The Tyr recombinase domain maps to 169–354 (AFLDYVDKEY…VNDEQKNALD (186 aa)). Catalysis depends on residues Arg210, Lys234, His306, Arg309, and His332. The active-site O-(3'-phospho-DNA)-tyrosine intermediate is Tyr341.

The protein belongs to the 'phage' integrase family. XerS subfamily.

Its subcellular location is the cytoplasm. Its activity is regulated as follows. FtsK is required for recombination. Site-specific tyrosine recombinase, which acts by catalyzing the cutting and rejoining of the recombining DNA molecules. Essential to convert dimers of the bacterial chromosome into monomers to permit their segregation at cell division. The protein is Tyrosine recombinase XerS of Streptococcus equi subsp. zooepidemicus (strain MGCS10565).